The primary structure comprises 340 residues: N-acetyl-gamma-glutamyl-phosphate reductase (340 aa).

C147 is a catalytic residue.

The protein belongs to the NAGSA dehydrogenase family. Type 1 subfamily.

The protein localises to the cytoplasm. It catalyses the reaction N-acetyl-L-glutamate 5-semialdehyde + phosphate + NADP(+) = N-acetyl-L-glutamyl 5-phosphate + NADPH + H(+). It participates in amino-acid biosynthesis; L-arginine biosynthesis; N(2)-acetyl-L-ornithine from L-glutamate: step 3/4. In terms of biological role, catalyzes the NADPH-dependent reduction of N-acetyl-5-glutamyl phosphate to yield N-acetyl-L-glutamate 5-semialdehyde. This is N-acetyl-gamma-glutamyl-phosphate reductase from Lactococcus lactis subsp. lactis (strain IL1403) (Streptococcus lactis).